Here is a 439-residue protein sequence, read N- to C-terminus: ATP-dependent DNA helicase dda (439 aa).

Position 32 to 39 (32 to 39 (GPAGTGKT)) interacts with ATP.

In terms of assembly, monomer. Interacts with UvsX and gene 32 protein.

It carries out the reaction Couples ATP hydrolysis with the unwinding of duplex DNA at the replication fork by translocating in the 5'-3' direction. This creates two antiparallel DNA single strands (ssDNA). The leading ssDNA polymer is the template for DNA polymerase III holoenzyme which synthesizes a continuous strand.. It catalyses the reaction ATP + H2O = ADP + phosphate + H(+). Its function is as follows. DNA helicase that stimulates viral DNA replication and recombination. Plays a role in T4 DNA replication initiation by selecting and activating DNA origins. Acts by dissociating and reassociating with the DNA molecule being unwound. Unwinds DNA as a monomer in a 5'-3' direction at a rate of 250 bp/s and can efficiently displace proteins from the DNA. This Enterobacteria phage T4 (Bacteriophage T4) protein is ATP-dependent DNA helicase dda (dda).